The following is a 95-amino-acid chain: Aspartyl/glutamyl-tRNA(Asn/Gln) amidotransferase subunit C (95 aa).

Belongs to the GatC family. In terms of assembly, heterotrimer of A, B and C subunits.

It catalyses the reaction L-glutamyl-tRNA(Gln) + L-glutamine + ATP + H2O = L-glutaminyl-tRNA(Gln) + L-glutamate + ADP + phosphate + H(+). It carries out the reaction L-aspartyl-tRNA(Asn) + L-glutamine + ATP + H2O = L-asparaginyl-tRNA(Asn) + L-glutamate + ADP + phosphate + 2 H(+). Allows the formation of correctly charged Asn-tRNA(Asn) or Gln-tRNA(Gln) through the transamidation of misacylated Asp-tRNA(Asn) or Glu-tRNA(Gln) in organisms which lack either or both of asparaginyl-tRNA or glutaminyl-tRNA synthetases. The reaction takes place in the presence of glutamine and ATP through an activated phospho-Asp-tRNA(Asn) or phospho-Glu-tRNA(Gln). This chain is Aspartyl/glutamyl-tRNA(Asn/Gln) amidotransferase subunit C, found in Chlorobium phaeobacteroides (strain DSM 266 / SMG 266 / 2430).